The chain runs to 564 residues: Eukaryotic translation initiation factor 3 subunit L (564 aa).

Ser2 is subject to N-acetylserine. Position 21 is a phosphoserine (Ser21). The region spanning 331–537 is the PCI domain; sequence DAIRVFANIL…IHIADTKVAR (207 aa). Lys465 and Lys549 each carry N6-acetyllysine.

This sequence belongs to the eIF-3 subunit L family. As to quaternary structure, component of the eukaryotic translation initiation factor 3 (eIF-3) complex, which is composed of 13 subunits: EIF3A, EIF3B, EIF3C, EIF3D, EIF3E, EIF3F, EIF3G, EIF3H, EIF3I, EIF3J, EIF3K, EIF3L and EIF3M. The eIF-3 complex appears to include 3 stable modules: module A is composed of EIF3A, EIF3B, EIF3G and EIF3I; module B is composed of EIF3F, EIF3H, and EIF3M; and module C is composed of EIF3C, EIF3D, EIF3E, EIF3K and EIF3L. EIF3C of module C binds EIF3B of module A and EIF3H of module B, thereby linking the three modules. EIF3J is a labile subunit that binds to the eIF-3 complex via EIF3B. The eIF-3 complex interacts with RPS6KB1 under conditions of nutrient depletion. Mitogenic stimulation leads to binding and activation of a complex composed of MTOR and RPTOR, leading to phosphorylation and release of RPS6KB1 and binding of EIF4B to eIF-3. Interacts with RRN3.

The protein resides in the cytoplasm. Component of the eukaryotic translation initiation factor 3 (eIF-3) complex, which is required for several steps in the initiation of protein synthesis. The eIF-3 complex associates with the 40S ribosome and facilitates the recruitment of eIF-1, eIF-1A, eIF-2:GTP:methionyl-tRNAi and eIF-5 to form the 43S pre-initiation complex (43S PIC). The eIF-3 complex stimulates mRNA recruitment to the 43S PIC and scanning of the mRNA for AUG recognition. The eIF-3 complex is also required for disassembly and recycling of post-termination ribosomal complexes and subsequently prevents premature joining of the 40S and 60S ribosomal subunits prior to initiation. The eIF-3 complex specifically targets and initiates translation of a subset of mRNAs involved in cell proliferation, including cell cycling, differentiation and apoptosis, and uses different modes of RNA stem-loop binding to exert either translational activation or repression. In Pan troglodytes (Chimpanzee), this protein is Eukaryotic translation initiation factor 3 subunit L.